We begin with the raw amino-acid sequence, 166 residues long: Ureidoglycolate lyase (166 aa).

This sequence belongs to the ureidoglycolate lyase family. In terms of assembly, homodimer. Requires Ni(2+) as cofactor.

It carries out the reaction (S)-ureidoglycolate = urea + glyoxylate. Its pathway is nitrogen metabolism; (S)-allantoin degradation. Functionally, catalyzes the catabolism of the allantoin degradation intermediate (S)-ureidoglycolate, generating urea and glyoxylate. Involved in the utilization of allantoin as nitrogen source. The polypeptide is Ureidoglycolate lyase (Rhizobium leguminosarum bv. trifolii (strain WSM2304)).